The primary structure comprises 115 residues: MHILDQVDAASLKQDIPAFRAGDTVKVHVNIIEGSRSRVQVFQGVVIARSGEGVRETFTVRKISFQVGVERMFPVHSPVIDKIEVVTRGDVRRAKLYYLRELRGKKAKIKEKRDN.

This sequence belongs to the bacterial ribosomal protein bL19 family.

Functionally, this protein is located at the 30S-50S ribosomal subunit interface and may play a role in the structure and function of the aminoacyl-tRNA binding site. The protein is Large ribosomal subunit protein bL19 of Leifsonia xyli subsp. xyli (strain CTCB07).